Consider the following 435-residue polypeptide: MKGVNMEKQQPSKAALLSIIPGLGQIYNKQKAKGFIFLGVTIVFVLYFLALATPELSNLITLGDKPGRDNSLFMLIRGAFHLIFVIVYVLFYFSNIKDAHTIAKRINNGIPVPRTLKDMIKGIYENGFPYLLIIPSYVAMTFAIIFPVIVTLMIAFTNYDFQHLPPNKLLDWVGLTNFTNIWSLSTFRSAFGSVLSWTIIWALAASTLQIVIGIFTAIIANQPFIKGKRIFGVIFLLPWAVPAFITILTFSNMFNDSVGAINTQVLPILAKFLPFLDGALIPWKTDPTWTKIALIMMQGWLGFPYIYVLTLGILQSIPNDLYEAAYIDGANAWQKFRNITFPMILAVAAPTLISQYTFNFNNFSIMYLFNGGGPGSVGGGAGSTDILISWIYRLTTGTSPQYSMAAAVTLIISIIVISISMIAFKKLHAFDMEDV.

10 consecutive transmembrane segments (helical) span residues 34–54 (GFIFLGVTIVFVLYFLALATP), 73–93 (FMLIRGAFHLIFVIVYVLFYF), 130–150 (YLLIIPSYVAMTFAIIFPVIV), 199–219 (IIWALAASTLQIVIGIFTAII), 230–250 (IFGVIFLLPWAVPAFITILTF), 263–283 (TQVLPILAKFLPFLDGALIPW), 294–314 (LIMMQGWLGFPYIYVLTLGIL), 338–358 (NITFPMILAVAAPTLISQYTF), 371–391 (GGGPGSVGGGAGSTDILISWI), and 404–424 (MAAAVTLIISIIVISISMIAF). The region spanning 195 to 423 (LSWTIIWALA…IIVISISMIA (229 aa)) is the ABC transmembrane type-1 domain.

The protein belongs to the binding-protein-dependent transport system permease family. MalFG subfamily.

Its subcellular location is the cell membrane. Its function is as follows. Part of the binding-protein-dependent transport system for maltodextrin; probably responsible for the translocation of the substrate across the membrane. The protein is Maltodextrin transport system permease protein MalC (malC) of Streptococcus pneumoniae serotype 4 (strain ATCC BAA-334 / TIGR4).